The sequence spans 492 residues: Trigger factor (492 aa).

The 86-residue stretch at 164-249 folds into the PPIase FKBP-type domain; the sequence is GDLVVVDFVG…VSDVRVPRKA (86 aa). Positions 440–492 are disordered; sequence EAEEDSIGKHDHDHDHKEKASDKPKAKKAAAPKKKAAPKKKAAPKAEKKSSDE. The span at 445–463 shows a compositional bias: basic and acidic residues; the sequence is SIGKHDHDHDHKEKASDKP. The span at 464–482 shows a compositional bias: basic residues; it reads KAKKAAAPKKKAAPKKKAA. Residues 483–492 show a composition bias toward basic and acidic residues; the sequence is PKAEKKSSDE.

This sequence belongs to the FKBP-type PPIase family. Tig subfamily.

Its subcellular location is the cytoplasm. It carries out the reaction [protein]-peptidylproline (omega=180) = [protein]-peptidylproline (omega=0). Its function is as follows. Involved in protein export. Acts as a chaperone by maintaining the newly synthesized protein in an open conformation. Functions as a peptidyl-prolyl cis-trans isomerase. In Zymomonas mobilis subsp. mobilis (strain ATCC 31821 / ZM4 / CP4), this protein is Trigger factor.